A 338-amino-acid polypeptide reads, in one-letter code: tRNA N6-adenosine threonylcarbamoyltransferase (338 aa).

Residues H111 and H115 each contribute to the Fe cation site. Substrate-binding positions include 134 to 138 (LVSGG), D167, G180, and N272. Residue D300 coordinates Fe cation.

The protein belongs to the KAE1 / TsaD family. The cofactor is Fe(2+).

It is found in the cytoplasm. The enzyme catalyses L-threonylcarbamoyladenylate + adenosine(37) in tRNA = N(6)-L-threonylcarbamoyladenosine(37) in tRNA + AMP + H(+). Its function is as follows. Required for the formation of a threonylcarbamoyl group on adenosine at position 37 (t(6)A37) in tRNAs that read codons beginning with adenine. Is involved in the transfer of the threonylcarbamoyl moiety of threonylcarbamoyl-AMP (TC-AMP) to the N6 group of A37, together with TsaE and TsaB. TsaD likely plays a direct catalytic role in this reaction. This Shewanella baltica (strain OS223) protein is tRNA N6-adenosine threonylcarbamoyltransferase.